A 398-amino-acid chain; its full sequence is 1-deoxy-D-xylulose 5-phosphate reductoisomerase (398 aa).

Residues threonine 10, glycine 11, serine 12, isoleucine 13, glycine 36, arginine 37, asparagine 38, and asparagine 124 each coordinate NADPH. A 1-deoxy-D-xylulose 5-phosphate-binding site is contributed by lysine 125. Residue glutamate 126 participates in NADPH binding. Aspartate 150 lines the Mn(2+) pocket. Residues serine 151, glutamate 152, serine 186, and histidine 209 each coordinate 1-deoxy-D-xylulose 5-phosphate. Glutamate 152 contributes to the Mn(2+) binding site. Residue glycine 215 participates in NADPH binding. Serine 222, asparagine 227, lysine 228, and glutamate 231 together coordinate 1-deoxy-D-xylulose 5-phosphate. Glutamate 231 is a binding site for Mn(2+).

The protein belongs to the DXR family. As to quaternary structure, homodimer. Mg(2+) serves as cofactor. The cofactor is Mn(2+).

The enzyme catalyses 2-C-methyl-D-erythritol 4-phosphate + NADP(+) = 1-deoxy-D-xylulose 5-phosphate + NADPH + H(+). It functions in the pathway isoprenoid biosynthesis; isopentenyl diphosphate biosynthesis via DXP pathway; isopentenyl diphosphate from 1-deoxy-D-xylulose 5-phosphate: step 1/6. Catalyzes the NADPH-dependent rearrangement and reduction of 1-deoxy-D-xylulose-5-phosphate (DXP) to 2-C-methyl-D-erythritol 4-phosphate (MEP). The sequence is that of 1-deoxy-D-xylulose 5-phosphate reductoisomerase from Yersinia pseudotuberculosis serotype O:1b (strain IP 31758).